A 73-amino-acid polypeptide reads, in one-letter code: DNA-directed RNA polymerase subunit omega (73 aa).

This sequence belongs to the RNA polymerase subunit omega family. In terms of assembly, the RNAP catalytic core consists of 2 alpha, 1 beta, 1 beta' and 1 omega subunit. When a sigma factor is associated with the core the holoenzyme is formed, which can initiate transcription.

It carries out the reaction RNA(n) + a ribonucleoside 5'-triphosphate = RNA(n+1) + diphosphate. Its function is as follows. Promotes RNA polymerase assembly. Latches the N- and C-terminal regions of the beta' subunit thereby facilitating its interaction with the beta and alpha subunits. This Clostridium novyi (strain NT) protein is DNA-directed RNA polymerase subunit omega.